A 453-amino-acid chain; its full sequence is Bifunctional protein GlmU (453 aa).

Residues 1 to 225 are pyrophosphorylase; the sequence is MNIVILAAGT…GWETLGVNSK (225 aa). UDP-N-acetyl-alpha-D-glucosamine contacts are provided by residues 6–9, Lys-20, Gln-71, 76–77, 98–100, Gly-135, Glu-150, Asn-165, and Asn-223; these read LAAG, GT, and YGD. Asp-100 is a Mg(2+) binding site. Asn-223 contacts Mg(2+). A linker region spans residues 226–246; it reads AQLAELERIHQRNLADALLAA. The interval 247–453 is N-acetyltransferase; the sequence is GVTLADPARI…GYVRPVKKKS (207 aa). Positions 329 and 347 each coordinate UDP-N-acetyl-alpha-D-glucosamine. His-359 acts as the Proton acceptor in catalysis. 2 residues coordinate UDP-N-acetyl-alpha-D-glucosamine: Tyr-362 and Asn-373. Acetyl-CoA-binding positions include Ala-376, 382–383, Ser-401, and Ala-419; that span reads NY.

This sequence in the N-terminal section; belongs to the N-acetylglucosamine-1-phosphate uridyltransferase family. In the C-terminal section; belongs to the transferase hexapeptide repeat family. As to quaternary structure, homotrimer. Mg(2+) is required as a cofactor.

It is found in the cytoplasm. The enzyme catalyses alpha-D-glucosamine 1-phosphate + acetyl-CoA = N-acetyl-alpha-D-glucosamine 1-phosphate + CoA + H(+). The catalysed reaction is N-acetyl-alpha-D-glucosamine 1-phosphate + UTP + H(+) = UDP-N-acetyl-alpha-D-glucosamine + diphosphate. The protein operates within nucleotide-sugar biosynthesis; UDP-N-acetyl-alpha-D-glucosamine biosynthesis; N-acetyl-alpha-D-glucosamine 1-phosphate from alpha-D-glucosamine 6-phosphate (route II): step 2/2. It participates in nucleotide-sugar biosynthesis; UDP-N-acetyl-alpha-D-glucosamine biosynthesis; UDP-N-acetyl-alpha-D-glucosamine from N-acetyl-alpha-D-glucosamine 1-phosphate: step 1/1. Its pathway is bacterial outer membrane biogenesis; LPS lipid A biosynthesis. Its function is as follows. Catalyzes the last two sequential reactions in the de novo biosynthetic pathway for UDP-N-acetylglucosamine (UDP-GlcNAc). The C-terminal domain catalyzes the transfer of acetyl group from acetyl coenzyme A to glucosamine-1-phosphate (GlcN-1-P) to produce N-acetylglucosamine-1-phosphate (GlcNAc-1-P), which is converted into UDP-GlcNAc by the transfer of uridine 5-monophosphate (from uridine 5-triphosphate), a reaction catalyzed by the N-terminal domain. The chain is Bifunctional protein GlmU from Burkholderia pseudomallei (strain K96243).